The sequence spans 421 residues: Gamma-glutamyl phosphate reductase (421 aa).

Belongs to the gamma-glutamyl phosphate reductase family.

The protein resides in the cytoplasm. The enzyme catalyses L-glutamate 5-semialdehyde + phosphate + NADP(+) = L-glutamyl 5-phosphate + NADPH + H(+). It participates in amino-acid biosynthesis; L-proline biosynthesis; L-glutamate 5-semialdehyde from L-glutamate: step 2/2. Catalyzes the NADPH-dependent reduction of L-glutamate 5-phosphate into L-glutamate 5-semialdehyde and phosphate. The product spontaneously undergoes cyclization to form 1-pyrroline-5-carboxylate. The protein is Gamma-glutamyl phosphate reductase of Brucella abortus (strain 2308).